Here is a 401-residue protein sequence, read N- to C-terminus: UPF0283 membrane protein SO_1811 (401 aa).

Residues 1–22 (MSVELLPHSTEPHANGADKSVS) are disordered. 3 helical membrane passes run 99-119 (LARL…VLGL), 129-149 (LFSF…VGVI), and 239-259 (ESAV…IILW).

This sequence belongs to the UPF0283 family.

The protein localises to the cell inner membrane. The polypeptide is UPF0283 membrane protein SO_1811 (Shewanella oneidensis (strain ATCC 700550 / JCM 31522 / CIP 106686 / LMG 19005 / NCIMB 14063 / MR-1)).